A 421-amino-acid polypeptide reads, in one-letter code: 26S proteasome non-ATPase regulatory subunit 11A (421 aa).

Residues 227-391 enclose the PCI domain; it reads AYSYFYEAFE…GVLIVFDEPP (165 aa).

The protein belongs to the proteasome subunit S9 family. In terms of assembly, component of the lid subcomplex of the 19S proteasome regulatory particle complex (also named PA700 complex). The 26S proteasome consists of a 20S proteasome core and two 19S regulatory subunits.

The protein localises to the nucleus. It localises to the cytoplasm. It is found in the cytosol. Functionally, component of the lid subcomplex of the 26S proteasome, a multiprotein complex involved in the ATP-dependent degradation of ubiquitinated proteins. In the complex, psmd11a is required for proteasome assembly. The protein is 26S proteasome non-ATPase regulatory subunit 11A (psmd11a) of Danio rerio (Zebrafish).